A 289-amino-acid chain; its full sequence is MYG1 protein CT_386 (289 aa).

It belongs to the MYG1 family.

In Chlamydia trachomatis serovar D (strain ATCC VR-885 / DSM 19411 / UW-3/Cx), this protein is MYG1 protein CT_386.